Reading from the N-terminus, the 223-residue chain is Small ribosomal subunit protein uS3 (223 aa).

The KH type-2 domain maps to 39–108 (IRNFVKKNSY…NILINIVEVK (70 aa)).

The protein belongs to the universal ribosomal protein uS3 family. In terms of assembly, part of the 30S ribosomal subunit. Forms a tight complex with proteins S10 and S14.

Its function is as follows. Binds the lower part of the 30S subunit head. Binds mRNA in the 70S ribosome, positioning it for translation. The polypeptide is Small ribosomal subunit protein uS3 (Clostridium botulinum (strain Kyoto / Type A2)).